Here is a 314-residue protein sequence, read N- to C-terminus: Cytochrome f (314 aa).

The N-terminal stretch at 1 to 30 (MATNKFFKSLLFTLTIAISSFGFCVENSSA) is a signal peptide. Heme-binding residues include Tyr31, Cys51, Cys54, and His55. A helical membrane pass occupies residues 280–300 (ILGYLAFCFCLLLTQVLLVLK).

The protein belongs to the cytochrome f family. As to quaternary structure, the 4 large subunits of the cytochrome b6-f complex are cytochrome b6, subunit IV (17 kDa polypeptide, petD), cytochrome f and the Rieske protein, while the 4 small subunits are PetG, PetL, PetM and PetN. The complex functions as a dimer. The cofactor is heme.

The protein resides in the plastid. It localises to the chloroplast thylakoid membrane. Functionally, component of the cytochrome b6-f complex, which mediates electron transfer between photosystem II (PSII) and photosystem I (PSI), cyclic electron flow around PSI, and state transitions. In Thalassiosira pseudonana (Marine diatom), this protein is Cytochrome f.